The primary structure comprises 1036 residues: Exportin-T (1036 aa).

It belongs to the exportin family.

Its subcellular location is the nucleus. The protein resides in the cytoplasm. TRNA nucleus export receptor which facilitates tRNA translocation across the nuclear pore complex. Involved in pre-tRNA splicing, probably by affecting the interaction of pre-tRNA with splicing endonuclease. The polypeptide is Exportin-T (LOS1) (Phaeosphaeria nodorum (strain SN15 / ATCC MYA-4574 / FGSC 10173) (Glume blotch fungus)).